Consider the following 252-residue polypeptide: Ureidoacrylate amidohydrolase RutB (252 aa).

The segment covering 1–14 has biased composition (polar residues); the sequence is MSTPARNTTLTSNT. A disordered region spans residues 1-31; that stretch reads MSTPARNTTLTSNTPAGAPRLPGAPAPQVLP. The span at 15-27 shows a compositional bias: low complexity; the sequence is PAGAPRLPGAPAP. The active-site Proton acceptor is aspartate 50. The active site involves lysine 159. The Nucleophile role is filled by cysteine 192.

Belongs to the isochorismatase family. RutB subfamily.

The catalysed reaction is (Z)-3-ureidoacrylate + H2O + H(+) = (Z)-3-aminoacrylate + NH4(+) + CO2. It catalyses the reaction (Z)-3-ureidoacrylate + H2O = (Z)-3-aminoacrylate + carbamate + H(+). It carries out the reaction (Z)-2-methylureidoacrylate + H2O + H(+) = (Z)-2-methylaminoacrylate + NH4(+) + CO2. Functionally, hydrolyzes ureidoacrylate to form aminoacrylate and carbamate. The carbamate hydrolyzes spontaneously, thereby releasing one of the nitrogen atoms of the pyrimidine ring as ammonia and one of its carbon atoms as CO2. This Variovorax paradoxus (strain S110) protein is Ureidoacrylate amidohydrolase RutB.